A 460-amino-acid polypeptide reads, in one-letter code: Argininosuccinate lyase (460 aa).

This sequence belongs to the lyase 1 family. Argininosuccinate lyase subfamily.

The protein localises to the cytoplasm. The catalysed reaction is 2-(N(omega)-L-arginino)succinate = fumarate + L-arginine. It participates in amino-acid biosynthesis; L-arginine biosynthesis; L-arginine from L-ornithine and carbamoyl phosphate: step 3/3. In Oleidesulfovibrio alaskensis (strain ATCC BAA-1058 / DSM 17464 / G20) (Desulfovibrio alaskensis), this protein is Argininosuccinate lyase.